We begin with the raw amino-acid sequence, 479 residues long: Ribosomal RNA small subunit methyltransferase F (479 aa).

S-adenosyl-L-methionine-binding positions include 125 to 131 (AAAPGSK), Glu-149, Asp-176, and Asp-194. Cys-247 serves as the catalytic Nucleophile.

The protein belongs to the class I-like SAM-binding methyltransferase superfamily. RsmB/NOP family.

It localises to the cytoplasm. The catalysed reaction is cytidine(1407) in 16S rRNA + S-adenosyl-L-methionine = 5-methylcytidine(1407) in 16S rRNA + S-adenosyl-L-homocysteine + H(+). In terms of biological role, specifically methylates the cytosine at position 1407 (m5C1407) of 16S rRNA. This Salmonella agona (strain SL483) protein is Ribosomal RNA small subunit methyltransferase F.